A 235-amino-acid chain; its full sequence is Cobalt transport protein CbiM (235 aa).

Residues 1-33 (MRYLKFFLLLVFLVPSFGFSMHIMEGFLPPTHA) form the signal peptide. 6 helical membrane-spanning segments follow: residues 34–51 (LIWYILSLPFFVIGLFTI), 63–83 (MLLAFVGAFTFVLSAMKIPSV), 95–115 (LGAIIFGPFTMTVIGTIVLLF), 118–138 (LLLAHGGLTTLGANTFSMAIV), 156–176 (NIAVFLAAFLGDLFTYVTTSF), and 199–219 (IFAITQVPLAIIEGLVTVVVI).

Belongs to the CbiM family. As to quaternary structure, forms an energy-coupling factor (ECF) transporter complex composed of an ATP-binding protein (A component, CbiO), a transmembrane protein (T component, CbiQ) and 2 possible substrate-capture proteins (S components, CbiM and CbiN) of unknown stoichimetry.

The protein resides in the cell inner membrane. It functions in the pathway cofactor biosynthesis; adenosylcobalamin biosynthesis. Its function is as follows. Part of the energy-coupling factor (ECF) transporter complex CbiMNOQ involved in cobalt import. The protein is Cobalt transport protein CbiM of Thermosipho melanesiensis (strain DSM 12029 / CIP 104789 / BI429).